Here is a 100-residue protein sequence, read N- to C-terminus: Small ribosomal subunit protein bS21 (100 aa).

Residues 61-100 (KLQREGLLPMKPKPVFGAGPGGDRGRGPAAGAGAGPRGPR) are disordered. Over residues 78-100 (AGPGGDRGRGPAAGAGAGPRGPR) the composition is skewed to gly residues.

Belongs to the bacterial ribosomal protein bS21 family.

This Rhodopseudomonas palustris (strain BisB18) protein is Small ribosomal subunit protein bS21.